The sequence spans 686 residues: MNLIILFLPFVGAFISGFLGRFVGTTGAQILTCACILTSALLSLYYWLSINELIIGLFSFEGDQVYFTDWNFLSNNTFINLGTWVDSEYIKISWEFTFNEITLPFLFTVLFISFLIHLFSVNYMANDPHIQRFFSYLSLFTFFMAILVTGANYFVLFVGWEGIGVVSYLLINFWFTRIQANKAAILAFNTNRIGDMALSIAYFVMLPAFGSADFSTVFSLPAYINQTTITIIGFLLLVGAMAKSSQIPLHNWLPGSMEGPTPVSALIHAATLVTAGSYLLIRSSPILEYAPTVLLVITIIGASTAFFAATCGLVQNDIKRIIAFSTISQLGYMVMAIGLSQYNVALAHTLFHAYFKALLFLGAGSVIHAFGDIQDVRKMGGLINFLPFTYAVMLVGTLSLLATPFLTGFYSKDLIIELAYGQYSFSGTYAYILGSVTAGLTAFYSFRLISLVFLTKPNGNKQNYLNSHEASITVIIPLAVLAIFSIFFGYVTSDLFVGIGSDFFANTIFIHPNNISLVEAEFSMSLIFKLLPTIFSLAGTLFALYLYNYNPHFIDSLVENNLGKKVYGFLNGKYYFDVIYNNYIISKGLQFGYNISKEIDRGVIELIGPYGMSNVLYSTSANIAKLDTGIITTYALYITLGLLSLLFIVFAPMLVNTTINDEFRLIILFIFTLIVNSAYLNKKLSK.

17 consecutive transmembrane segments (helical) span residues 3–23 (LIIL…GRFV), 40–60 (ALLS…LFSF), 101–121 (ITLP…LFSV), 139–159 (LFTF…LFVG), 160–180 (WEGI…RIQA), 198–218 (LSIA…STVF), 222–242 (AYIN…GAMA), 261–281 (TPVS…YLLI), 293–313 (VLLV…TCGL), 321–341 (IIAF…GLSQ), 350–370 (LFHA…IHAF), 382–402 (LINF…SLLA), 432–452 (ILGS…ISLV), 472–492 (ITVI…GYVT), 526–546 (LIFK…ALYL), 635–655 (ALYI…PMLV), and 665–685 (LIIL…KKLS).

This sequence belongs to the complex I subunit 5 family.

The protein localises to the mitochondrion inner membrane. The catalysed reaction is a ubiquinone + NADH + 5 H(+)(in) = a ubiquinol + NAD(+) + 4 H(+)(out). Functionally, core subunit of the mitochondrial membrane respiratory chain NADH dehydrogenase (Complex I) that is believed to belong to the minimal assembly required for catalysis. Complex I functions in the transfer of electrons from NADH to the respiratory chain. The immediate electron acceptor for the enzyme is believed to be ubiquinone. This is NADH-ubiquinone oxidoreductase chain 5 (ND5) from Schizophyllum commune (Split gill fungus).